The sequence spans 317 residues: Cyclin-dependent kinase 1 (317 aa).

A Protein kinase domain is found at 7–292 (YQRQEKVGEG…AKRALIHPYF (286 aa)). ATP-binding positions include 13–21 (VGEGTYGVV) and Lys37. Thr17 carries the phosphothreonine modification. The residue at position 18 (Tyr18) is a Phosphotyrosine; by SWE1. The Proton acceptor role is filled by Asp133. Residue Thr166 is modified to Phosphothreonine; by CAK. Positions 296–317 (DDRDHNNYNEDNIGIDKHQNMQ) are disordered.

The protein belongs to the protein kinase superfamily. CMGC Ser/Thr protein kinase family. CDC2/CDKX subfamily. Forms several complexes with cyclins CCN1, CLB2, CLN3, and HGC1. The CDC28-CCN1 complex associates with septin CDC11 upon hyphal induction. Interacts with IQG1, RFA2, and HSP90. Post-translationally, phosphorylated at Tyr-18 by SWE1 in a cell cycle-dependent manner. Yeast-form and hyphal cells display similar dynamics of phosphorylation and dephosphorylation of Tyr-18. Tyr-18 phosphorylation leads to inhibition of CDC28 kinase activity.

The enzyme catalyses L-seryl-[protein] + ATP = O-phospho-L-seryl-[protein] + ADP + H(+). It carries out the reaction L-threonyl-[protein] + ATP = O-phospho-L-threonyl-[protein] + ADP + H(+). Its activity is regulated as follows. Phosphorylation at Thr-17 or Tyr-18 inactivates the enzyme, while phosphorylation at Thr-166 activates it. In terms of biological role, cyclin-dependent kinase that acts as a master regulator of the mitotic and meiotic cell cycles. May drive the G1-S transition. Plays a role in mitotic exit. Plays a role in the expression of morphology-related transcription factors, and especially hyphae-specific genes. Binds distinct cyclin subunits as cells progress through the division cycle or flamentous growth. The CDC28-CLB2 complex regulates cytokinesis partly by phosphorylating the actomyosin ring component IQG1. The CDC28-CLN3 complex phosphorylates SLA1 which regulates cortical actin patch dynamics. The CDC28-CCN1 complex phosphorylates CDC11 and SEC2 upon induction of filamentous growth. The CDC28-HGC1 complex also phosphorylates SEC2 and maintains CDC11 phosphorylation throughout hyphal growth. Moreover, the CDC28-HGC1 complex phosphorylates and prevents RGA2 from localizing to hyphal tips, leading to localized CDC42 activation for hyphal extension. CDC28-HGC1 phosphorylation of EFG1 represses cell separation genes during hyphal growth. Additional substrates for CDC28 are RFA2 in G1-phase; MOB2, which is required for the maintenance of polarisome components and for inhibition of cell separation in hyphae; and GIN4 to regulate its association to SEP7 and subsequent septin ring assembly. The polypeptide is Cyclin-dependent kinase 1 (Candida albicans (strain SC5314 / ATCC MYA-2876) (Yeast)).